Consider the following 302-residue polypeptide: Segregation and condensation protein A (302 aa).

This sequence belongs to the ScpA family. Component of a cohesin-like complex composed of ScpA, ScpB and the Smc homodimer, in which ScpA and ScpB bind to the head domain of Smc. The presence of the three proteins is required for the association of the complex with DNA.

Its subcellular location is the cytoplasm. Participates in chromosomal partition during cell division. May act via the formation of a condensin-like complex containing Smc and ScpB that pull DNA away from mid-cell into both cell halves. The sequence is that of Segregation and condensation protein A from Xylella fastidiosa (strain Temecula1 / ATCC 700964).